An 85-amino-acid chain; its full sequence is Large ribosomal subunit protein bL27 (85 aa).

Positions 1–21 are disordered; that stretch reads MAHKKAGGSTRNGRDSESKRL.

Belongs to the bacterial ribosomal protein bL27 family.

The polypeptide is Large ribosomal subunit protein bL27 (Pseudomonas entomophila (strain L48)).